Here is a 729-residue protein sequence, read N- to C-terminus: MLYKGDTLYLNWLEDGIAELVFDAPGSVNKLDTATVASLGHALDVLEKQHDLKALLLRSEKAAFIVGADITEFLSLFQVPAEQLSQWLHFANSVFNRLEDLPVPTLCAINGYALGGGCECVLATDFRLATPDARIGLPETKLGIMPGFGGSVRLPRLLGADSALEIIAAGKDITADAALKVGLVDAVVKPEKLIEGALRMLRQAIDGELDWQARRQPKLEPLRLSKIEATMSFTIAKGMVMQTAGKHYPAPMTAVKTIEAAAGLGRDEALALENKSFVPLARSSEARALVGIFLNDQYVKGLAKKLTKETETPKQAAVLGAGIMGGGIAYQSAWKGVPVIMKDINEKSLTLGISEASKLLNKQLERGKIDGLKLAGVIATIHPTLDYAGFERADVVVEAVVENPKVKKAVLAETEEKVRPDTVIASNTSTIPISELASVLKRPENFCGMHFFNPVHRMPLVEVIRGEKTSDATIAKVVSWASKMGKTPIVVNDCPGFFVNRVLFPYFAGFSQLLRDGADFRQIDKVMEKQFGWPMGPAYLLDVVGIDTAHHAQAVMAAGFPQRMQKDYRDAIDALFDAGRFGQKNGKGFYAYQEDSKGKPRKVPDDAVDSLLAEVSQPKRAFSDEEIVARMMIPMVNEVVRCLEEGIIASPAEADMALVYGLGFPPFHGGAFRWLDTQGSAKYLDMAQHYQHLGPLYEAPAGLRDKASHNAPYYPQVEPAQPVGELQTA.

An enoyl-CoA hydratase/isomerase region spans residues 1 to 189; it reads MLYKGDTLYL…KVGLVDAVVK (189 aa). Residue Asp-296 participates in substrate binding. The tract at residues 311–729 is 3-hydroxyacyl-CoA dehydrogenase; it reads ETPKQAAVLG…AQPVGELQTA (419 aa). NAD(+)-binding positions include Met-324, Asp-343, 400–402, Lys-407, and Ser-429; that span reads VVE. His-450 (for 3-hydroxyacyl-CoA dehydrogenase activity) is an active-site residue. Residue Asn-453 coordinates NAD(+). Substrate-binding residues include Asn-500 and Tyr-660. The tract at residues 708-729 is disordered; the sequence is SHNAPYYPQVEPAQPVGELQTA.

This sequence in the N-terminal section; belongs to the enoyl-CoA hydratase/isomerase family. It in the C-terminal section; belongs to the 3-hydroxyacyl-CoA dehydrogenase family. As to quaternary structure, heterotetramer of two alpha chains (FadB) and two beta chains (FadA).

It catalyses the reaction a (3S)-3-hydroxyacyl-CoA + NAD(+) = a 3-oxoacyl-CoA + NADH + H(+). The catalysed reaction is a (3S)-3-hydroxyacyl-CoA = a (2E)-enoyl-CoA + H2O. It carries out the reaction a 4-saturated-(3S)-3-hydroxyacyl-CoA = a (3E)-enoyl-CoA + H2O. The enzyme catalyses (3S)-3-hydroxybutanoyl-CoA = (3R)-3-hydroxybutanoyl-CoA. It catalyses the reaction a (3Z)-enoyl-CoA = a 4-saturated (2E)-enoyl-CoA. The catalysed reaction is a (3E)-enoyl-CoA = a 4-saturated (2E)-enoyl-CoA. It participates in lipid metabolism; fatty acid beta-oxidation. Involved in the aerobic and anaerobic degradation of long-chain fatty acids via beta-oxidation cycle. Catalyzes the formation of 3-oxoacyl-CoA from enoyl-CoA via L-3-hydroxyacyl-CoA. It can also use D-3-hydroxyacyl-CoA and cis-3-enoyl-CoA as substrate. The polypeptide is Fatty acid oxidation complex subunit alpha (Cronobacter sakazakii (strain ATCC BAA-894) (Enterobacter sakazakii)).